A 59-amino-acid polypeptide reads, in one-letter code: UPF0391 membrane protein lpg2521 (59 aa).

2 helical membrane-spanning segments follow: residues 5 to 25 (ALIF…GIAV) and 30 to 50 (IAKI…IMGL).

Belongs to the UPF0391 family.

The protein localises to the cell membrane. The polypeptide is UPF0391 membrane protein lpg2521 (Legionella pneumophila subsp. pneumophila (strain Philadelphia 1 / ATCC 33152 / DSM 7513)).